We begin with the raw amino-acid sequence, 509 residues long: Maturase K (509 aa).

This sequence belongs to the intron maturase 2 family. MatK subfamily.

It is found in the plastid. The protein localises to the chloroplast. Its function is as follows. Usually encoded in the trnK tRNA gene intron. Probably assists in splicing its own and other chloroplast group II introns. The sequence is that of Maturase K from Nicotiana rustica (Aztec tobacco).